Consider the following 241-residue polypeptide: Carboxy-S-adenosyl-L-methionine synthase (241 aa).

Residues Tyr-38, 63–65, 88–89, 116–117, Asn-131, and Arg-198 contribute to the S-adenosyl-L-methionine site; these read GCS, DN, and DI.

It belongs to the class I-like SAM-binding methyltransferase superfamily. Cx-SAM synthase family. Homodimer.

It catalyses the reaction prephenate + S-adenosyl-L-methionine = carboxy-S-adenosyl-L-methionine + 3-phenylpyruvate + H2O. Its function is as follows. Catalyzes the conversion of S-adenosyl-L-methionine (SAM) to carboxy-S-adenosyl-L-methionine (Cx-SAM). The polypeptide is Carboxy-S-adenosyl-L-methionine synthase (Actinobacillus succinogenes (strain ATCC 55618 / DSM 22257 / CCUG 43843 / 130Z)).